We begin with the raw amino-acid sequence, 363 residues long: Chorismate synthase (363 aa).

NADP(+) is bound by residues Arg-48 and Arg-54. Residues 125–127 (RSS), 237–238 (NA), Gly-277, 292–296 (KPTSS), and Arg-318 contribute to the FMN site.

It belongs to the chorismate synthase family. Homotetramer. Requires FMNH2 as cofactor.

The catalysed reaction is 5-O-(1-carboxyvinyl)-3-phosphoshikimate = chorismate + phosphate. It functions in the pathway metabolic intermediate biosynthesis; chorismate biosynthesis; chorismate from D-erythrose 4-phosphate and phosphoenolpyruvate: step 7/7. Functionally, catalyzes the anti-1,4-elimination of the C-3 phosphate and the C-6 proR hydrogen from 5-enolpyruvylshikimate-3-phosphate (EPSP) to yield chorismate, which is the branch point compound that serves as the starting substrate for the three terminal pathways of aromatic amino acid biosynthesis. This reaction introduces a second double bond into the aromatic ring system. The protein is Chorismate synthase of Pseudomonas putida (strain GB-1).